We begin with the raw amino-acid sequence, 851 residues long: Thrombospondin type-1 domain-containing protein 1 (851 aa).

A signal peptide spans 1 to 24 (MKPMLKDFSNLLLVVLCDYVLGEA). Over 25 to 412 (EYLLLQEPVH…SPQDPVKSNN (388 aa)) the chain is Extracellular. N-linked (GlcNAc...) asparagine glycosylation is found at Asn-53, Asn-58, Asn-69, Asn-110, Asn-135, and Asn-304. Positions 339–392 (IETWGPWQPWSPCSTTCGDAVRERRRLCVTSFPSRPSCSGMSSETSPCSLEECA) constitute a TSP type-1 domain. 3 disulfides stabilise this stretch: Cys-351/Cys-386, Cys-355/Cys-391, and Cys-366/Cys-376. The chain crosses the membrane as a helical span at residues 413–433 (VVTVTGISLCLFIIFATVLIT). Over 434 to 851 (LWRRFGRAPK…STLSVEKLVI (418 aa)) the chain is Cytoplasmic. Ser-462 carries the post-translational modification Phosphoserine. 3 disordered regions span residues 471-516 (SEPR…ESFQ), 626-646 (KSQIRSTGGRDGSSERCHSRS), and 682-777 (SRMR…SSPI). The segment covering 685–695 (RTWDQMEDRCR) has biased composition (basic and acidic residues). Over residues 765 to 776 (SHRSASRKQSSP) the composition is skewed to polar residues.

As to quaternary structure, part of a complex composed of THSD1, PTK2/FAK1, TLN1 and VCL. Interacts with TLN1. As to expression, expressed in cerebral vascular endothelium.

The protein resides in the endosome membrane. Its subcellular location is the cell junction. It localises to the focal adhesion. Functionally, is a positive regulator of nascent focal adhesion assembly, involved in the modulation of endothelial cell attachment to the extracellular matrix. This is Thrombospondin type-1 domain-containing protein 1 (Thsd1) from Mus musculus (Mouse).